A 291-amino-acid polypeptide reads, in one-letter code: Protease HtpX (291 aa).

2 helical membrane-spanning segments follow: residues Ile4 to Ile24 and Leu36 to Met56. Residue His143 participates in Zn(2+) binding. Glu144 is an active-site residue. Residue His147 coordinates Zn(2+). 2 helical membrane-spanning segments follow: residues Gly151–Ser171 and Phe199–Trp219. Glu225 serves as a coordination point for Zn(2+).

It belongs to the peptidase M48B family. Zn(2+) serves as cofactor.

It localises to the cell inner membrane. The polypeptide is Protease HtpX (Aliivibrio fischeri (strain ATCC 700601 / ES114) (Vibrio fischeri)).